The chain runs to 123 residues: Small ribosomal subunit protein uS13 (123 aa).

Positions 97 to 123 (PCRGQRTHTNSRTRKGPRRGVMAKKKK) are disordered.

Belongs to the universal ribosomal protein uS13 family. As to quaternary structure, part of the 30S ribosomal subunit. Forms a loose heterodimer with protein S19. Forms two bridges to the 50S subunit in the 70S ribosome.

Located at the top of the head of the 30S subunit, it contacts several helices of the 16S rRNA. In the 70S ribosome it contacts the 23S rRNA (bridge B1a) and protein L5 of the 50S subunit (bridge B1b), connecting the 2 subunits; these bridges are implicated in subunit movement. Contacts the tRNAs in the A and P-sites. This Solidesulfovibrio magneticus (strain ATCC 700980 / DSM 13731 / RS-1) (Desulfovibrio magneticus) protein is Small ribosomal subunit protein uS13.